Here is a 351-residue protein sequence, read N- to C-terminus: N-acetyl-gamma-glutamyl-phosphate reductase (351 aa).

Residue cysteine 154 is part of the active site.

It belongs to the NAGSA dehydrogenase family. Type 1 subfamily.

The protein localises to the cytoplasm. The enzyme catalyses N-acetyl-L-glutamate 5-semialdehyde + phosphate + NADP(+) = N-acetyl-L-glutamyl 5-phosphate + NADPH + H(+). It participates in amino-acid biosynthesis; L-arginine biosynthesis; N(2)-acetyl-L-ornithine from L-glutamate: step 3/4. Functionally, catalyzes the NADPH-dependent reduction of N-acetyl-5-glutamyl phosphate to yield N-acetyl-L-glutamate 5-semialdehyde. This is N-acetyl-gamma-glutamyl-phosphate reductase from Prochlorococcus marinus (strain MIT 9312).